Consider the following 164-residue polypeptide: Transcription antitermination protein NusB (164 aa).

This sequence belongs to the NusB family.

Functionally, involved in transcription antitermination. Required for transcription of ribosomal RNA (rRNA) genes. Binds specifically to the boxA antiterminator sequence of the ribosomal RNA (rrn) operons. This chain is Transcription antitermination protein NusB, found in Desulfovibrio desulfuricans (strain ATCC 27774 / DSM 6949 / MB).